Reading from the N-terminus, the 592-residue chain is Aspartate--tRNA(Asp/Asn) ligase (592 aa).

E172 serves as a coordination point for L-aspartate. The interval 196-199 is aspartate; sequence QLFK. R218 contacts L-aspartate. ATP contacts are provided by residues 218 to 220 and Q227; that span reads RDE. H442 is an L-aspartate binding site. Residue E476 participates in ATP binding. Residue R483 participates in L-aspartate binding. 528-531 is an ATP binding site; sequence GWDR. The interval 553–592 is disordered; the sequence is SGTDPLTGAPTPITPEQRKEAGIDADPYAAAGRPPGRQSA.

Belongs to the class-II aminoacyl-tRNA synthetase family. Type 1 subfamily. As to quaternary structure, homodimer.

The protein localises to the cytoplasm. It catalyses the reaction tRNA(Asx) + L-aspartate + ATP = L-aspartyl-tRNA(Asx) + AMP + diphosphate. Its function is as follows. Aspartyl-tRNA synthetase with relaxed tRNA specificity since it is able to aspartylate not only its cognate tRNA(Asp) but also tRNA(Asn). Reaction proceeds in two steps: L-aspartate is first activated by ATP to form Asp-AMP and then transferred to the acceptor end of tRNA(Asp/Asn). The chain is Aspartate--tRNA(Asp/Asn) ligase from Acidothermus cellulolyticus (strain ATCC 43068 / DSM 8971 / 11B).